A 494-amino-acid polypeptide reads, in one-letter code: Glutamyl-tRNA(Gln) amidotransferase subunit A (494 aa).

Active-site charge relay system residues include K80 and S155. S179 serves as the catalytic Acyl-ester intermediate.

It belongs to the amidase family. GatA subfamily. Heterotrimer of A, B and C subunits.

The enzyme catalyses L-glutamyl-tRNA(Gln) + L-glutamine + ATP + H2O = L-glutaminyl-tRNA(Gln) + L-glutamate + ADP + phosphate + H(+). In terms of biological role, allows the formation of correctly charged Gln-tRNA(Gln) through the transamidation of misacylated Glu-tRNA(Gln) in organisms which lack glutaminyl-tRNA synthetase. The reaction takes place in the presence of glutamine and ATP through an activated gamma-phospho-Glu-tRNA(Gln). This is Glutamyl-tRNA(Gln) amidotransferase subunit A from Lachnoclostridium phytofermentans (strain ATCC 700394 / DSM 18823 / ISDg) (Clostridium phytofermentans).